A 40-amino-acid polypeptide reads, in one-letter code: Omega-conotoxin RsXXVIA (40 aa).

Post-translationally, contains 4 disulfide bonds. Expressed by the venom duct.

It is found in the secreted. Its function is as follows. Omega-conotoxins act at presynaptic membranes, they bind and block voltage-gated calcium channels (Cav). This toxin inhibits rat Cav2.2/CACNA1B calcium channels in a dose-dependent manner (EC(50)=2.8 uM), whose effect is partially reversed after washing. In vivo, when injected into mice, it shows both an analgesic effect in acute thermal pain at 30 and 45 minutes post-injection and an anti-nociceptive effect in a formalin chronic pain test. This chain is Omega-conotoxin RsXXVIA, found in Conus regularis (Regular cone).